Consider the following 199-residue polypeptide: Pyridoxal 5'-phosphate synthase subunit PdxT (199 aa).

52–54 contacts L-glutamine; the sequence is GES. Cys-84 acts as the Nucleophile in catalysis. L-glutamine contacts are provided by residues Arg-115 and 143-144; that span reads IR. Active-site charge relay system residues include His-179 and Glu-181.

The protein belongs to the glutaminase PdxT/SNO family. As to quaternary structure, in the presence of PdxS, forms a dodecamer of heterodimers. Only shows activity in the heterodimer.

The enzyme catalyses aldehydo-D-ribose 5-phosphate + D-glyceraldehyde 3-phosphate + L-glutamine = pyridoxal 5'-phosphate + L-glutamate + phosphate + 3 H2O + H(+). It catalyses the reaction L-glutamine + H2O = L-glutamate + NH4(+). It participates in cofactor biosynthesis; pyridoxal 5'-phosphate biosynthesis. In terms of biological role, catalyzes the hydrolysis of glutamine to glutamate and ammonia as part of the biosynthesis of pyridoxal 5'-phosphate. The resulting ammonia molecule is channeled to the active site of PdxS. The sequence is that of Pyridoxal 5'-phosphate synthase subunit PdxT from Methanosarcina mazei (strain ATCC BAA-159 / DSM 3647 / Goe1 / Go1 / JCM 11833 / OCM 88) (Methanosarcina frisia).